Consider the following 577-residue polypeptide: Steryl-sulfatase (577 aa).

A signal peptide spans 1-19 (MLWPCLLALLLSQLNFLCA). Topologically, residues 21–183 (RPGPGPNFLL…GTVFGSAQQV (163 aa)) are lumenal. Residues D34 and D35 each coordinate Ca(2+). N-linked (GlcNAc...) asparagine glycosylation is present at N46. Residue C74 coordinates Ca(2+). The Nucleophile role is filled by C74. C74 carries the post-translational modification 3-oxoalanine (Cys). The active site involves H135. 2 disulfide bridges follow: C140–C147 and C169–C241. Residues 184 to 207 (FVVLPMNILGAVLLAMALARWAGL) traverse the membrane as a helical segment. Residues 208-211 (ARPP) lie on the Cytoplasmic side of the membrane. A helical membrane pass occupies residues 212–233 (GWVFGVTVAAMAAVGGAYVAFL). Residues 234 to 577 (YHFRPANCFL…PLACRCAGDG (344 aa)) lie on the Lumenal side of the membrane. An N-linked (GlcNAc...) asparagine glycan is attached at N332. The Ca(2+) site is built by D341 and H342. Intrachain disulfides connect C445-C488, C480-C486, and C561-C571. N458 carries an N-linked (GlcNAc...) asparagine glycan.

This sequence belongs to the sulfatase family. As to quaternary structure, homodimer. Ca(2+) is required as a cofactor. The conversion to 3-oxoalanine (also known as C-formylglycine, FGly), of a serine or cysteine residue in prokaryotes and of a cysteine residue in eukaryotes, is critical for catalytic activity.

It localises to the microsome membrane. The protein localises to the endoplasmic reticulum membrane. The enzyme catalyses dehydroepiandrosterone 3-sulfate + H2O = 3beta-hydroxyandrost-5-en-17-one + sulfate + H(+). It catalyses the reaction estrone 3-sulfate + H2O = estrone + sulfate + H(+). Its function is as follows. Catalyzes the conversion of sulfated steroid precursors, such as dehydroepiandrosterone sulfate (DHEA-S) and estrone sulfate to the free steroid. In Rattus norvegicus (Rat), this protein is Steryl-sulfatase (Sts).